The following is a 238-amino-acid chain: Endonuclease III homolog (238 aa).

Residues 129 to 155 form the HhH domain; it reads REKGLPREMKDLISLPGIGNKMALLYM. Residue Lys149 is the Nucleophile; for N-glycosylase activity of the active site. Residues Cys217, Cys224, Cys227, and Cys233 each coordinate [4Fe-4S] cluster.

It belongs to the Nth/MutY family. It depends on [4Fe-4S] cluster as a cofactor.

It is found in the nucleus. The protein resides in the mitochondrion. It catalyses the reaction 2'-deoxyribonucleotide-(2'-deoxyribose 5'-phosphate)-2'-deoxyribonucleotide-DNA = a 3'-end 2'-deoxyribonucleotide-(2,3-dehydro-2,3-deoxyribose 5'-phosphate)-DNA + a 5'-end 5'-phospho-2'-deoxyribonucleoside-DNA + H(+). Its function is as follows. Bifunctional DNA N-glycosylase with associated apurinic/apyrimidinic (AP) lyase function that catalyzes the first step in base excision repair (BER), the primary repair pathway for the repair of oxidative DNA damage. The DNA N-glycosylase activity releases the damaged DNA base from DNA by cleaving the N-glycosidic bond, leaving an AP site. The AP lyase activity cleaves the phosphodiester bond 3' to the AP site by a beta-elimination. Primarily recognizes and repairs oxidative base damage of pyrimidines. This Encephalitozoon cuniculi (strain GB-M1) (Microsporidian parasite) protein is Endonuclease III homolog.